The following is a 1556-amino-acid chain: MDKINNENDKINISIKAPIGNIEDNNNNSNNNSNNNSVSNSNNNSSISINSGSNTPTNSKNRGIKIFDLDDPFTSKRLSGFFSPESLAELSKLQLNDTDNNDNLTTTTTTTTTTTTTTTTTNTITSKNNSPNTSPLLSSTTISSITSGAPIKKRFERIPSGLSHVTNHYDDDDDDESSSSEEDFDSTELVCRPNKTSSTTATTTTTTTSVSPLTSSFVMRRPSSPSPPPSCSSPTLSPSLSATRRLSGNLVKVATDSDNQSLEPCNNKTIVDNNDNDNDNNNNHNNNNNNNNNNNSTEDISIKPICNKTFLDLDEKIYLKIFGYLFAEDLCSINRVSKHLCNIINNQQLWKDLFSIYIKIYSEPSDIYIWDEDLYSIYNNNNNNNNNNNNNNNNNNNNNNSNISNNNNNINNSNGNNNPYFTGGVSNSSIGAIGGSIGSSAGSNIALKLRSNTSIPIIERGRSNTIAMPTPTFINEINMLNSNNSVNNNNNISNNNTINSNNAGVIINPSGTVNNNINNINSSNSINSSSSSGSNINLSNNNSSTIHGSYISSNLILNSVLRKFTPTTSVPSTNEVTDFIESCHHFPSKLLICKLVQRYLVPREFQRHLSDIDWVKMVERPIQLRVGKLLKKVIDQKKVNFDYGTMLILRSFIRGYIQSTSDMAKGLIVGLQKKQVLKVFDISRVSDILLIKIFRNLDSIKDLSVCQRVSKRWNKAIAISSLWEQLYLNYRKKLHHEGDINIWDDPSLHTVEYLYEFFDQIQPSPQQQQQQQQQQQQQQQQQQQPQLQTNESNNNNEDIKQNDNNNNNSNNNGLNNLQKLIEENLEGSNLSNGGNSGSSFSPFNPLSGSNGGSSFGPFGSGGGGGSNSNIGGSSNQLNSSSGGGGSGFLAMASGGSSVSSVTSTPSTISTNCTPTGGSTTNSPNFQSPMVSSSTVLPPPIPFSPNLSSPRSMSISLSSPPPLPNKPPELKLPDSSLSPNSSFNNNLSSTSISIPSTPTTTPSSSLLTFIPPNTTSTTTTTSTTNITSTTMPISAATTTTTTTTSTTSTIIQPIQPIPPVNNNGSQSDLSKISDLNANPNTTTTTTTNTIESSSSSSSITNNNENIIEPIKSPQPSMINVQKLMNLNQLVDKLTSITVATEISEVNACLATYRTFISTSQLVEKLFQRYHIPRASNIKSILDWKQRIETPIQVKVCKVFKKLIDDHFDDFNGTIIELFKVFLLHIIDKQSPLTNHLIRSFSRKLSGENGSTGSVIGITGGKSSRKGGGSGSGSGSGGGSGSSIIGGAVGGTIKASQSKIGRMMSVRKAQQFNDIISLPAEEIAKQLTLIEFEIFGKIQSSEFLNQSWAKEKTFHLAPNIRASIDRFNTVTKWVCTIILKEEKIRTRTKIMSKLLKVAKNLRSYSNFHTLMAILSGLNEIHIYRLKFTQQELKPKIQKISSELQTLMSVEGNHEAYRTELSNVDPKQSCIPYLGVYLKDLTFIQDDTNKKGDGINIKQSLNLYNILKTIQNFQKNPYSFEEFPKIKETLLNLPVWTEDNLYRVSMQREPRNCKRSDLI.

Disordered regions lie at residues 19–63 (IGNI…KNRG), 93–141 (LQLN…SSTT), 163–239 (SHVT…LSPS), and 254–296 (ATDS…NNNS). 2 stretches are compositionally biased toward low complexity: residues 25–54 (NNNN…SGSN) and 96–141 (NDTD…SSTT). A compositionally biased stretch (acidic residues) spans 170 to 186 (DDDDDDESSSSEEDFDS). The segment covering 196 to 216 (TSSTTATTTTTTTSVSPLTSS) has biased composition (low complexity). Polar residues predominate over residues 256-271 (DSDNQSLEPCNNKTIV). Low complexity predominate over residues 279 to 295 (DNNNNHNNNNNNNNNNN). Residues 307-353 (NKTFLDLDEKIYLKIFGYLFAEDLCSINRVSKHLCNIINNQQLWKDL) form the F-box 1 domain. Residues 385 to 416 (NNNNNNNNNNNNNNNNSNISNNNNNINNSNGN) are disordered. Positions 679 to 726 (VFDISRVSDILLIKIFRNLDSIKDLSVCQRVSKRWNKAIAISSLWEQL) constitute an F-box 2 domain. Disordered stretches follow at residues 762–815 (QPSP…NGLN) and 827–1101 (GSNL…ITNN). Residues 827 to 848 (GSNLSNGGNSGSSFSPFNPLSG) are compositionally biased toward low complexity. Residues 849–866 (SNGGSSFGPFGSGGGGGS) are compositionally biased toward gly residues. Composition is skewed to low complexity over residues 867 to 880 (NSNI…LNSS) and 888 to 910 (FLAM…TIST). Over residues 911–935 (NCTPTGGSTTNSPNFQSPMVSSSTV) the composition is skewed to polar residues. Low complexity-rich tracts occupy residues 943-957 (SPNL…ISLS) and 972-1053 (PDSS…IQPI). Residues 1059 to 1076 (VNNNGSQSDLSKISDLNA) show a composition bias toward polar residues. Residues 1077 to 1101 (NPNTTTTTTTNTIESSSSSSSITNN) are compositionally biased toward low complexity. One can recognise an N-terminal Ras-GEF domain in the interval 1116–1244 (MINVQKLMNL…LIRSFSRKLS (129 aa)). The interval 1254–1279 (IGITGGKSSRKGGGSGSGSGSGGGSG) is disordered. Residues 1264 to 1279 (KGGGSGSGSGSGGGSG) show a composition bias toward gly residues. The Ras-GEF domain occupies 1317 to 1548 (PAEEIAKQLT…YRVSMQREPR (232 aa)).

Functionally, promotes the exchange of Ras-bound GDP by GTP. This is Ras guanine nucleotide exchange factor G (gefG) from Dictyostelium discoideum (Social amoeba).